The sequence spans 408 residues: CinA-like protein (408 aa).

This sequence belongs to the CinA family.

In Anaeromyxobacter sp. (strain K), this protein is CinA-like protein.